Here is a 292-residue protein sequence, read N- to C-terminus: Glutamyl-Q tRNA(Asp) synthetase (292 aa).

Residues 11 to 15 (RFAPS) and Glu47 each bind L-glutamate. Residues 14-24 (PSPTGPLHFGS) carry the 'HIGH' region motif. The Zn(2+) site is built by Cys103, Cys105, Tyr116, and Cys120. Tyr173 and Arg191 together coordinate L-glutamate. The 'KMSKS' region signature appears at 229–233 (KLSKQ). Residue Lys232 coordinates ATP.

The protein belongs to the class-I aminoacyl-tRNA synthetase family. GluQ subfamily. Zn(2+) is required as a cofactor.

Its function is as follows. Catalyzes the tRNA-independent activation of glutamate in presence of ATP and the subsequent transfer of glutamate onto a tRNA(Asp). Glutamate is transferred on the 2-amino-5-(4,5-dihydroxy-2-cyclopenten-1-yl) moiety of the queuosine in the wobble position of the QUC anticodon. This chain is Glutamyl-Q tRNA(Asp) synthetase, found in Acinetobacter baylyi (strain ATCC 33305 / BD413 / ADP1).